Reading from the N-terminus, the 250-residue chain is Probable transcriptional regulatory protein ROP_68700 (250 aa).

The protein belongs to the TACO1 family.

It is found in the cytoplasm. This is Probable transcriptional regulatory protein ROP_68700 from Rhodococcus opacus (strain B4).